A 353-amino-acid polypeptide reads, in one-letter code: Photosystem II D2 protein (353 aa).

Threonine 2 carries the post-translational modification N-acetylthreonine. Threonine 2 is subject to Phosphothreonine. A helical membrane pass occupies residues 41-61 (CAYFALGGWFTGTTFVTSWYT). Residue histidine 118 participates in chlorophyll a binding. Residues 125-141 (GFMLRQFELARSVQLRP) form a helical membrane-spanning segment. Pheophytin a is bound by residues glutamine 130 and asparagine 143. Residues 153–166 (VFVSVFLIYPLGQS) form a helical membrane-spanning segment. Residue histidine 198 participates in chlorophyll a binding. Residues 208-228 (AALLCAIHGATVENTLFEDGD) form a helical membrane-spanning segment. Residues histidine 215 and phenylalanine 262 each coordinate a plastoquinone. Histidine 215 contributes to the Fe cation binding site. Histidine 269 serves as a coordination point for Fe cation. A helical membrane pass occupies residues 279 to 295 (GLWMSALGVVGLALNLR).

It belongs to the reaction center PufL/M/PsbA/D family. In terms of assembly, PSII is composed of 1 copy each of membrane proteins PsbA, PsbB, PsbC, PsbD, PsbE, PsbF, PsbH, PsbI, PsbJ, PsbK, PsbL, PsbM, PsbT, PsbX, PsbY, PsbZ, Psb30/Ycf12, at least 3 peripheral proteins of the oxygen-evolving complex and a large number of cofactors. It forms dimeric complexes. The cofactor is The D1/D2 heterodimer binds P680, chlorophylls that are the primary electron donor of PSII, and subsequent electron acceptors. It shares a non-heme iron and each subunit binds pheophytin, quinone, additional chlorophylls, carotenoids and lipids. There is also a Cl(-1) ion associated with D1 and D2, which is required for oxygen evolution. The PSII complex binds additional chlorophylls, carotenoids and specific lipids..

The protein resides in the plastid. It is found in the chloroplast thylakoid membrane. It catalyses the reaction 2 a plastoquinone + 4 hnu + 2 H2O = 2 a plastoquinol + O2. In terms of biological role, photosystem II (PSII) is a light-driven water:plastoquinone oxidoreductase that uses light energy to abstract electrons from H(2)O, generating O(2) and a proton gradient subsequently used for ATP formation. It consists of a core antenna complex that captures photons, and an electron transfer chain that converts photonic excitation into a charge separation. The D1/D2 (PsbA/PsbD) reaction center heterodimer binds P680, the primary electron donor of PSII as well as several subsequent electron acceptors. D2 is needed for assembly of a stable PSII complex. This chain is Photosystem II D2 protein, found in Dioscorea elephantipes (Elephant's foot yam).